Consider the following 423-residue polypeptide: Putative galacturan 1,4-alpha-galacturonidase C (423 aa).

The first 20 residues, 1–20 (MRFSIISLVSLPLFLGLTYA), serve as a signal peptide directing secretion. Asn-100, Asn-120, Asn-150, Asn-173, and Asn-185 each carry an N-linked (GlcNAc...) asparagine glycan. Asp-229 serves as the catalytic Proton donor. Cys-231 and Cys-248 form a disulfide bridge. Asn-245 carries an N-linked (GlcNAc...) asparagine glycan. Asn-252 is a catalytic residue. 2 N-linked (GlcNAc...) asparagine glycosylation sites follow: Asn-344 and Asn-362. Cysteines 379 and 385 form a disulfide. Asn-400 carries an N-linked (GlcNAc...) asparagine glycan. Residues Cys-409 and Cys-423 are joined by a disulfide bond.

This sequence belongs to the glycosyl hydrolase 28 family.

It is found in the secreted. It carries out the reaction [(1-&gt;4)-alpha-D-galacturonosyl](n) + H2O = alpha-D-galacturonate + [(1-&gt;4)-alpha-D-galacturonosyl](n-1). Its function is as follows. Specific in hydrolyzing the terminal glycosidic bond of polygalacturonic acid and oligogalacturonates. The polypeptide is Putative galacturan 1,4-alpha-galacturonidase C (rgxC) (Neosartorya fischeri (strain ATCC 1020 / DSM 3700 / CBS 544.65 / FGSC A1164 / JCM 1740 / NRRL 181 / WB 181) (Aspergillus fischerianus)).